Reading from the N-terminus, the 307-residue chain is Ubiquitin recognition factor in ER-associated degradation protein 1 (307 aa).

M1 carries the post-translational modification N-acetylmethionine. A phosphoserine mark is found at S129, S231, S245, S247, and S299. Disordered regions lie at residues 230–255 (GSGN…GDIK) and 282–307 (EEDE…GRKP).

It belongs to the UFD1 family. Interacts with USP13. Heterodimer with NPLOC4, this heterodimer binds VCP and inhibits Golgi membrane fusion. Interacts with ZFAND2B; probably through VCP.

It is found in the nucleus. Its subcellular location is the cytoplasm. The protein localises to the cytosol. Its pathway is protein degradation; proteasomal ubiquitin-dependent pathway. Essential component of the ubiquitin-dependent proteolytic pathway which degrades ubiquitin fusion proteins. The ternary complex containing UFD1, VCP and NPLOC4 binds ubiquitinated proteins and is necessary for the export of misfolded proteins from the ER to the cytoplasm, where they are degraded by the proteasome. The NPLOC4-UFD1-VCP complex regulates spindle disassembly at the end of mitosis and is necessary for the formation of a closed nuclear envelope. It may be involved in the development of some ectoderm-derived structures. Acts as a negative regulator of type I interferon production via the complex formed with VCP and NPLOC4, which binds to RIGI and recruits RNF125 to promote ubiquitination and degradation of RIGI. The chain is Ubiquitin recognition factor in ER-associated degradation protein 1 from Rattus norvegicus (Rat).